Reading from the N-terminus, the 581-residue chain is Probable bifunctional SAT/APS kinase 2 (581 aa).

The segment at Met-1–Ala-200 is adenylsulfate kinase. Gly-10 to Ser-17 is an ATP binding site. The active-site Phosphoserine intermediate is the Ser-84. The tract at residues Pro-201–Ser-581 is sulfate adenylyltransferase.

In the N-terminal section; belongs to the APS kinase family. It in the C-terminal section; belongs to the sulfate adenylyltransferase family.

The enzyme catalyses sulfate + ATP + H(+) = adenosine 5'-phosphosulfate + diphosphate. It catalyses the reaction adenosine 5'-phosphosulfate + ATP = 3'-phosphoadenylyl sulfate + ADP + H(+). Its pathway is sulfur metabolism; hydrogen sulfide biosynthesis; sulfite from sulfate: step 1/3. It participates in sulfur metabolism; hydrogen sulfide biosynthesis; sulfite from sulfate: step 2/3. This chain is Probable bifunctional SAT/APS kinase 2 (sat2/cysC2), found in Sorangium cellulosum (strain So ce56) (Polyangium cellulosum (strain So ce56)).